The sequence spans 198 residues: ATP-dependent Clp protease proteolytic subunit (198 aa).

Serine 98 functions as the Nucleophile in the catalytic mechanism. Residue histidine 123 is part of the active site.

Belongs to the peptidase S14 family. Fourteen ClpP subunits assemble into 2 heptameric rings which stack back to back to give a disk-like structure with a central cavity, resembling the structure of eukaryotic proteasomes.

Its subcellular location is the cytoplasm. It carries out the reaction Hydrolysis of proteins to small peptides in the presence of ATP and magnesium. alpha-casein is the usual test substrate. In the absence of ATP, only oligopeptides shorter than five residues are hydrolyzed (such as succinyl-Leu-Tyr-|-NHMec, and Leu-Tyr-Leu-|-Tyr-Trp, in which cleavage of the -Tyr-|-Leu- and -Tyr-|-Trp bonds also occurs).. In terms of biological role, cleaves peptides in various proteins in a process that requires ATP hydrolysis. Has a chymotrypsin-like activity. Plays a major role in the degradation of misfolded proteins. This Listeria monocytogenes serovar 1/2a (strain ATCC BAA-679 / EGD-e) protein is ATP-dependent Clp protease proteolytic subunit.